We begin with the raw amino-acid sequence, 244 residues long: Probable transcriptional regulatory protein DMR_30850 (244 aa).

Belongs to the TACO1 family.

It localises to the cytoplasm. The chain is Probable transcriptional regulatory protein DMR_30850 from Solidesulfovibrio magneticus (strain ATCC 700980 / DSM 13731 / RS-1) (Desulfovibrio magneticus).